The sequence spans 463 residues: MSWNQYPGGGHHQQGGYGYRPPPPQWAQQGPPPPPNMGYRPPPPPQAYYNNPPPPQQYQRPAPQQNGYQQGGYQQQQQSQGNYRTSNGGYVPPTGAPVEASYHHTGAGYTPPSGTPQRTSAPYGAGAPIRPPSQAQHYGPQLQGQGGQSAQPYFQYSQCTGKKKALCIGINYVGSSSALAGCINDAHNVQKFLIERYGYKSEDIVMLTDDARNPRQIPTRANILAAMHWLVQGAQPNDSLFFHYSGHGGQTPDLDGDEDDGYDEVIYPLDFKTAGHIVDDDITDCKGRHNIMVRPLPAGCRLTAIYDSCHSGTALDLPYIYSTEGVIKEPNLLAEAGQGLLSAGMSYLRGDTGGMLQGIMGIGKKVMNQNSGAMEKARQTKTSPADVISWSGCKDSQTSADTQEAGRATGAMSYAFIAALTKYPQQSYVQLLNTIRDELKGKYDQKPQLSASHPMDTNILFIC.

The tract at residues 1-149 is disordered; that stretch reads MSWNQYPGGG…PQLQGQGGQS (149 aa). Residues 7–18 show a composition bias toward gly residues; the sequence is PGGGHHQQGGYG. The span at 20–56 shows a compositional bias: pro residues; it reads RPPPPQWAQQGPPPPPNMGYRPPPPPQAYYNNPPPPQ. Residues 57-83 are compositionally biased toward low complexity; that stretch reads QYQRPAPQQNGYQQGGYQQQQQSQGNY. Active-site residues include His-247 and Cys-309.

It belongs to the peptidase C14B family.

Functionally, involved in cell death (apoptosis). This Cryptococcus neoformans var. neoformans serotype D (strain B-3501A) (Filobasidiella neoformans) protein is Metacaspase-1 (MCA1).